The sequence spans 391 residues: 8-amino-7-oxononanoate synthase (391 aa).

108-109 serves as a coordination point for pyridoxal 5'-phosphate; the sequence is GF. Residue histidine 133 participates in substrate binding. Serine 180, histidine 208, and threonine 236 together coordinate pyridoxal 5'-phosphate. Lysine 239 bears the N6-(pyridoxal phosphate)lysine mark. Residue threonine 353 participates in substrate binding.

This sequence belongs to the class-II pyridoxal-phosphate-dependent aminotransferase family. BioF subfamily. As to quaternary structure, homodimer. Requires pyridoxal 5'-phosphate as cofactor.

It carries out the reaction 6-carboxyhexanoyl-[ACP] + L-alanine + H(+) = (8S)-8-amino-7-oxononanoate + holo-[ACP] + CO2. It participates in cofactor biosynthesis; biotin biosynthesis. Catalyzes the decarboxylative condensation of pimeloyl-[acyl-carrier protein] and L-alanine to produce 8-amino-7-oxononanoate (AON), [acyl-carrier protein], and carbon dioxide. This is 8-amino-7-oxononanoate synthase from Thermosipho melanesiensis (strain DSM 12029 / CIP 104789 / BI429).